The chain runs to 288 residues: 4-diphosphocytidyl-2-C-methyl-D-erythritol kinase (288 aa).

The active site involves Lys8. 90–100 (PLEAGLAGGSA) lines the ATP pocket. Residue Asp132 is part of the active site.

Belongs to the GHMP kinase family. IspE subfamily.

The enzyme catalyses 4-CDP-2-C-methyl-D-erythritol + ATP = 4-CDP-2-C-methyl-D-erythritol 2-phosphate + ADP + H(+). Its pathway is isoprenoid biosynthesis; isopentenyl diphosphate biosynthesis via DXP pathway; isopentenyl diphosphate from 1-deoxy-D-xylulose 5-phosphate: step 3/6. In terms of biological role, catalyzes the phosphorylation of the position 2 hydroxy group of 4-diphosphocytidyl-2C-methyl-D-erythritol. The polypeptide is 4-diphosphocytidyl-2-C-methyl-D-erythritol kinase (Carboxydothermus hydrogenoformans (strain ATCC BAA-161 / DSM 6008 / Z-2901)).